A 278-amino-acid polypeptide reads, in one-letter code: 3-methyl-2-oxobutanoate hydroxymethyltransferase (278 aa).

Mg(2+)-binding residues include Asp43 and Asp82. Residues 43 to 44 (DS), Asp82, and Lys112 each bind 3-methyl-2-oxobutanoate. Glu114 serves as a coordination point for Mg(2+). Glu181 functions as the Proton acceptor in the catalytic mechanism.

Belongs to the PanB family. Homodecamer; pentamer of dimers. Mg(2+) is required as a cofactor.

Its subcellular location is the cytoplasm. It catalyses the reaction 3-methyl-2-oxobutanoate + (6R)-5,10-methylene-5,6,7,8-tetrahydrofolate + H2O = 2-dehydropantoate + (6S)-5,6,7,8-tetrahydrofolate. Its pathway is cofactor biosynthesis; (R)-pantothenate biosynthesis; (R)-pantoate from 3-methyl-2-oxobutanoate: step 1/2. Functionally, catalyzes the reversible reaction in which hydroxymethyl group from 5,10-methylenetetrahydrofolate is transferred onto alpha-ketoisovalerate to form ketopantoate. The chain is 3-methyl-2-oxobutanoate hydroxymethyltransferase from Bacillus cereus (strain AH187).